The chain runs to 291 residues: G1/S-specific cyclin-D2 (291 aa).

Residues 264–291 (QQQQSNPSKTIEELDQASTPTDVRDINL) form a disordered region. Position 282 is a phosphothreonine (Thr282).

The protein belongs to the cyclin family. Cyclin D subfamily. In terms of assembly, interacts with the CDK4 and CDK6 protein kinases to form a serine/threonine kinase holoenzyme complex. The cyclin subunit imparts substrate specificity to the complex. Phosphorylation at Thr-282 by MAP kinases is required for ubiquitination and degradation by the DCX(AMBRA1) complex. Post-translationally, ubiquitinated by the DCX(AMBRA1) complex during the transition from G1 to S cell phase, leading to its degradation: ubiquitination is dependent on Thr-282 phosphorylation. The DCX(AMBRA1) complex represents the major regulator of CCND2 stability during the G1/S transition.

It is found in the nucleus. Its subcellular location is the cytoplasm. It localises to the nucleus membrane. Regulatory component of the cyclin D2-CDK4 (DC) complex that phosphorylates and inhibits members of the retinoblastoma (RB) protein family including RB1 and regulates the cell-cycle during G(1)/S transition. Phosphorylation of RB1 allows dissociation of the transcription factor E2F from the RB/E2F complex and the subsequent transcription of E2F target genes which are responsible for the progression through the G(1) phase. Hypophosphorylates RB1 in early G(1) phase. Cyclin D-CDK4 complexes are major integrators of various mitogenenic and antimitogenic signals. The polypeptide is G1/S-specific cyclin-D2 (CCND2) (Gallus gallus (Chicken)).